Consider the following 342-residue polypeptide: Ferredoxin--NADP reductase (342 aa).

FAD is bound by residues Cys17, Asp36, Gln44, Tyr49, Val89, Phe124, Asp289, and Thr330.

This sequence belongs to the ferredoxin--NADP reductase type 2 family. In terms of assembly, homodimer. The cofactor is FAD.

It carries out the reaction 2 reduced [2Fe-2S]-[ferredoxin] + NADP(+) + H(+) = 2 oxidized [2Fe-2S]-[ferredoxin] + NADPH. The chain is Ferredoxin--NADP reductase from Rhodopseudomonas palustris (strain ATCC BAA-98 / CGA009).